The sequence spans 272 residues: 2-succinyl-6-hydroxy-2,4-cyclohexadiene-1-carboxylate synthase (272 aa).

This sequence belongs to the AB hydrolase superfamily. MenH family. In terms of assembly, monomer.

It catalyses the reaction 5-enolpyruvoyl-6-hydroxy-2-succinyl-cyclohex-3-ene-1-carboxylate = (1R,6R)-6-hydroxy-2-succinyl-cyclohexa-2,4-diene-1-carboxylate + pyruvate. The protein operates within quinol/quinone metabolism; 1,4-dihydroxy-2-naphthoate biosynthesis; 1,4-dihydroxy-2-naphthoate from chorismate: step 3/7. Its pathway is quinol/quinone metabolism; menaquinone biosynthesis. Functionally, catalyzes a proton abstraction reaction that results in 2,5-elimination of pyruvate from 2-succinyl-5-enolpyruvyl-6-hydroxy-3-cyclohexene-1-carboxylate (SEPHCHC) and the formation of 2-succinyl-6-hydroxy-2,4-cyclohexadiene-1-carboxylate (SHCHC). In Yersinia pestis bv. Antiqua (strain Nepal516), this protein is 2-succinyl-6-hydroxy-2,4-cyclohexadiene-1-carboxylate synthase.